Consider the following 434-residue polypeptide: GPI-anchor transamidase component PIGU (434 aa).

The Cytoplasmic segment spans residues 1–3 (MAA). Residues 4–22 (PLALVLVVAVTVRAALFRS) traverse the membrane as a helical segment. Topologically, residues 23–78 (SLAEFISERVEVVSPLSSWKRVVEGLALLDLGVSPYSGAVFHETPLIIYLFHFLID) are lumenal. Residues 79–99 (YAELVFMITDALTAIALYFAI) traverse the membrane as a helical segment. Residues 100–136 (QDFNKVVFKKQKLLLELDQYAPDVAELIRTPMEMRYI) are Cytoplasmic-facing. Helical transmembrane passes span 137–157 (PLKVALYLLNPYTILSCVAKS), 158–177 (TCAINNTLIAFFILTTIKGS), 178–193 (VFLSAVFLALATYQSL), and 194–204 (YPVTLFAPGLL). Residues 205-221 (YLLQRQYIPVKVKSKAF) are Cytoplasmic-facing. Lysine 215 contributes to the a cardiolipin binding site. Residues 222 to 243 (WIFSWEYAMMYTGSLVVIVCLS) traverse the membrane as a helical segment. At 244 to 285 (FFLLSSWDFIPAVYGFILSVPDLTPNIGLFWYFFAEMFEHFS) the chain is on the lumenal side. Residues 286–305 (LFFVCVFQINVFFYTVPLAI) form a helical membrane-spanning segment. The Cytoplasmic portion of the chain corresponds to 306-310 (KLKEH). Lysine 308 provides a ligand contact to a cardiolipin. The next 2 membrane-spanning stretches (helical) occupy residues 311 to 330 (PIFFMFIQIAIISIFKSYPT) and 331 to 344 (VGDVALYMAFFPVW). The Cytoplasmic portion of the chain corresponds to 345 to 353 (NHLYRFLRN). Residues 354-371 (IFVLTCIIIVCSLLFPVL) traverse the membrane as a helical segment. Topologically, residues 372–383 (WHLWIYAGSANS) are lumenal. The a 2-acyl-6-[6-phosphoethanolamine-alpha-D-mannosyl-(1-&gt;2)-6-phosphoethanolamine-alpha-D-mannosyl-(1-&gt;6)-2-phosphoethanolamine-alpha-D-mannosyl-(1-&gt;4)-alpha-D-glucosaminyl]-1-(1-radyl,2-acyl-sn-glycero-3-phospho)-1D-myo-inositol site is built by asparagine 382 and asparagine 384. A helical transmembrane segment spans residues 384–405 (NFFYAITLTFNVGQILLISDYF). At 406–434 (YAFLRREYYLTHGLYLTAKDGTEAMLVLK) the chain is on the cytoplasmic side.

This sequence belongs to the PIGU family. In terms of assembly, heteropentamer. Part of the GPI-anchor transamidase complex, consisting of PIGK, PIGT, PIGS, PIGU and GAA1.

Its subcellular location is the endoplasmic reticulum membrane. The protein operates within glycolipid biosynthesis; glycosylphosphatidylinositol-anchor biosynthesis. In terms of biological role, component of the glycosylphosphatidylinositol-anchor (GPI-anchor) transamidase (GPI-T) complex that catalyzes the formation of the linkage between a proprotein and a GPI-anchor and participates in GPI anchored protein biosynthesis. Binds the lipid portion of GPI-anchor. May act as an organizer in the transmembrane layer to recruit other subunits, and thus is essential for assembly of the complex. In Mus musculus (Mouse), this protein is GPI-anchor transamidase component PIGU.